The sequence spans 537 residues: Probable feruloyl esterase ARB_07085 (537 aa).

Positions 1–22 are cleaved as a signal peptide; sequence MVTLPLLLSILPLAAVFSSAAS. 3 N-linked (GlcNAc...) asparagine glycosylation sites follow: Asn67, Asn76, and Asn189. 3 cysteine pairs are disulfide-bonded: Cys196/Cys459, Cys263/Cys280, and Cys508/Cys529. Residue Ser197 is the Acyl-ester intermediate of the active site. Residues Asp264, Asp267, Val269, Asp271, and Val273 each coordinate Ca(2+). Asn339 is a glycosylation site (N-linked (GlcNAc...) asparagine). Catalysis depends on charge relay system residues Asp419 and His458.

Belongs to the tannase family.

It localises to the secreted. The enzyme catalyses feruloyl-polysaccharide + H2O = ferulate + polysaccharide.. Hydrolyzes the feruloyl-arabinose ester bond in arabinoxylans as well as the feruloyl-galactose and feruloyl-arabinose ester bonds. This Arthroderma benhamiae (strain ATCC MYA-4681 / CBS 112371) (Trichophyton mentagrophytes) protein is Probable feruloyl esterase ARB_07085.